The following is a 227-amino-acid chain: Cytochrome c oxidase subunit 2 (227 aa).

Topologically, residues 1-14 are mitochondrial intermembrane; it reads MAYTFQLGLQDATS. Residues 15 to 45 form a helical membrane-spanning segment; that stretch reads PIMEELTNFHDHTLMIVFLISSLVLYVISLM. The Mitochondrial matrix portion of the chain corresponds to 46–59; that stretch reads LTTKLTHTNTMDAQ. A helical membrane pass occupies residues 60-87; the sequence is EVETIWTILPAVILILIALPSLRILYMM. Residues 88–227 lie on the Mitochondrial intermembrane side of the membrane; the sequence is DEINNPVLTV…HFENWSASMI (140 aa). Residues His161, Cys196, Glu198, Cys200, His204, and Met207 each contribute to the Cu cation site. Glu198 is a binding site for Mg(2+).

This sequence belongs to the cytochrome c oxidase subunit 2 family. In terms of assembly, component of the cytochrome c oxidase (complex IV, CIV), a multisubunit enzyme composed of 14 subunits. The complex is composed of a catalytic core of 3 subunits MT-CO1, MT-CO2 and MT-CO3, encoded in the mitochondrial DNA, and 11 supernumerary subunits COX4I, COX5A, COX5B, COX6A, COX6B, COX6C, COX7A, COX7B, COX7C, COX8 and NDUFA4, which are encoded in the nuclear genome. The complex exists as a monomer or a dimer and forms supercomplexes (SCs) in the inner mitochondrial membrane with NADH-ubiquinone oxidoreductase (complex I, CI) and ubiquinol-cytochrome c oxidoreductase (cytochrome b-c1 complex, complex III, CIII), resulting in different assemblies (supercomplex SCI(1)III(2)IV(1) and megacomplex MCI(2)III(2)IV(2)). Found in a complex with TMEM177, COA6, COX18, COX20, SCO1 and SCO2. Interacts with TMEM177 in a COX20-dependent manner. Interacts with COX20. Interacts with COX16. Cu cation serves as cofactor.

The protein resides in the mitochondrion inner membrane. The enzyme catalyses 4 Fe(II)-[cytochrome c] + O2 + 8 H(+)(in) = 4 Fe(III)-[cytochrome c] + 2 H2O + 4 H(+)(out). In terms of biological role, component of the cytochrome c oxidase, the last enzyme in the mitochondrial electron transport chain which drives oxidative phosphorylation. The respiratory chain contains 3 multisubunit complexes succinate dehydrogenase (complex II, CII), ubiquinol-cytochrome c oxidoreductase (cytochrome b-c1 complex, complex III, CIII) and cytochrome c oxidase (complex IV, CIV), that cooperate to transfer electrons derived from NADH and succinate to molecular oxygen, creating an electrochemical gradient over the inner membrane that drives transmembrane transport and the ATP synthase. Cytochrome c oxidase is the component of the respiratory chain that catalyzes the reduction of oxygen to water. Electrons originating from reduced cytochrome c in the intermembrane space (IMS) are transferred via the dinuclear copper A center (CU(A)) of subunit 2 and heme A of subunit 1 to the active site in subunit 1, a binuclear center (BNC) formed by heme A3 and copper B (CU(B)). The BNC reduces molecular oxygen to 2 water molecules using 4 electrons from cytochrome c in the IMS and 4 protons from the mitochondrial matrix. The polypeptide is Cytochrome c oxidase subunit 2 (MT-CO2) (Niviventer culturatus (Oldfield white-bellied rat)).